Consider the following 1522-residue polypeptide: Myosin-15 (1522 aa).

One can recognise a Myosin N-terminal SH3-like domain in the interval 12–61; it reads RKGDKVWVEDKDLAWIAADVLDSFDNKLHVETSTGKKVFVSPEKLFRRDP. Residues 67 to 737 enclose the Myosin motor domain; that stretch reads NGVDDMTKLT…QIGILDSRRA (671 aa). Residues 161–168 and 214–222 contribute to the ATP site; these read GESGAGKT and NDNSSRFGK. Actin-binding stretches follow at residues 499–533, 535–558, 593–618, and 618–640; these read LIEK…FQNF, FHPR…AGKV, FPSA…KQQL, and LQAL…KPNS. 5 IQ domains span residues 763-792, 788-817, 811-840, 836-865, and 859-888; these read ARAS…AAAA, NAAA…AAIV, LVSA…HRAA, EHRA…SIIA, and RQSS…VANE. A coiled-coil region spans residues 889–1059; it reads AGALRLAKTK…NQVLMQKTLI (171 aa). A Dilute domain is found at 1164–1456; that stretch reads NIIIEGINEA…VSQMRVLVDK (293 aa).

This sequence belongs to the TRAFAC class myosin-kinesin ATPase superfamily. Myosin family. Plant myosin class XI subfamily. Homodimer. Interacts with MYOB1 and MYOB7. Interacts with WIT1 and WIT2. Core component of the LINC complex which is composed of inner nuclear membrane SUN domain-containing proteins coupled to outer nuclear membrane WIP and WIT proteins. The LINC complex also involves nucleoskeletal proteins CRWN/LINC and possibly KAKU4 and the cytoskeletal myosin KAKU1.

The protein localises to the cytoplasm. It localises to the nucleus membrane. Its function is as follows. Myosin heavy chain that is required for the cell cycle-regulated transport of various organelles and proteins for their segregation. Functions by binding with its tail domain to receptor proteins on organelles and exerting force with its N-terminal motor domain against actin filaments, thereby transporting its cargo along polarized actin cables. Involved in trafficking of Golgi stacks and mitochondria. Plays a role in nuclear shape determination. Drives nuclear movement along actin filaments. As component of the SUN-WIP-WIT2-KAKU1 complex, mediates the transfer of cytoplasmic forces to the nuclear envelope (NE), leading to nuclear shape changes. The protein is Myosin-15 (XI-I) of Arabidopsis thaliana (Mouse-ear cress).